Reading from the N-terminus, the 324-residue chain is MCGPTATTVANAGTGGETIKGLPPGLKKPPWLRQRAPSGERFDYLSESLTGLKLNTVCEEAMCPNVGECWNGDTGTATVMLLGDTCTRGCRFCAVNTSQTPPPPDENEPENTAHAIAEWGVGYIVLTSVDRDDIPDGGSEHFARTVRTLKTIKSSVLVEALTPDFQGDMNAVAHLARSGLDVFAHNVETVERLQKRVRDPRANYEQSLAVLRHAKASKEGLVTKTSIMLGLGEEDEEIKQCMRACKEAGVDIFTLGQYLQPTPQHLPVKEFVTPEKFDFWKAYGEEVIGFRYVASGPLVRSSYKAGEFFIESMLRKDALDRGET.

Low complexity-rich tracts occupy residues 1 to 12 and 20 to 29; these read MCGPTATTVANA and KGLPPGLKKP. Residues 1-30 are disordered; the sequence is MCGPTATTVANAGTGGETIKGLPPGLKKPP. The [4Fe-4S] cluster site is built by Cys-58, Cys-63, Cys-69, Cys-86, Cys-90, Cys-93, and Ser-302. The Radical SAM core domain maps to 72–291; that stretch reads GDTGTATVML…AYGEEVIGFR (220 aa).

This sequence belongs to the radical SAM superfamily. Lipoyl synthase family. The cofactor is [4Fe-4S] cluster.

It localises to the plastid. The protein resides in the chloroplast. It catalyses the reaction [[Fe-S] cluster scaffold protein carrying a second [4Fe-4S](2+) cluster] + N(6)-octanoyl-L-lysyl-[protein] + 2 oxidized [2Fe-2S]-[ferredoxin] + 2 S-adenosyl-L-methionine + 4 H(+) = [[Fe-S] cluster scaffold protein] + N(6)-[(R)-dihydrolipoyl]-L-lysyl-[protein] + 4 Fe(3+) + 2 hydrogen sulfide + 2 5'-deoxyadenosine + 2 L-methionine + 2 reduced [2Fe-2S]-[ferredoxin]. It participates in protein modification; protein lipoylation via endogenous pathway; protein N(6)-(lipoyl)lysine from octanoyl-[acyl-carrier-protein]: step 2/2. Catalyzes the radical-mediated insertion of two sulfur atoms into the C-6 and C-8 positions of the octanoyl moiety bound to the lipoyl domains of lipoate-dependent enzymes, thereby converting the octanoylated domains into lipoylated derivatives. This is Lipoyl synthase, chloroplastic from Ostreococcus lucimarinus (strain CCE9901).